Reading from the N-terminus, the 103-residue chain is Phospholipase A2 large subunit (103 aa).

3 residues coordinate Ca(2+): tryptophan 7, glycine 9, and glycine 11. 4 cysteine pairs are disulfide-bonded: cysteine 8-cysteine 30, cysteine 29-cysteine 68, cysteine 36-cysteine 61, and cysteine 59-cysteine 96. Residue asparagine 16 is glycosylated (N-linked (GlcNAc...) asparagine). Residue histidine 33 is part of the active site. Aspartate 34 serves as a coordination point for Ca(2+).

This sequence belongs to the phospholipase A2 family. Group III subfamily. In terms of assembly, heterodimer composed of a large subunit and a small subunit; disulfide-linked. It depends on Ca(2+) as a cofactor. In terms of tissue distribution, expressed by the venom gland.

The protein resides in the secreted. The catalysed reaction is a 1,2-diacyl-sn-glycero-3-phosphocholine + H2O = a 1-acyl-sn-glycero-3-phosphocholine + a fatty acid + H(+). Functionally, phospholipase toxin, which catalyzes the calcium-dependent hydrolysis of the 2-acyl groups in 3-sn-phosphoglycerides. Inhibits both skeletal (RYR1) and cardiac (RYR2) ryanodine receptors (calcium release channels). Probably blocks ryanodine receptors by generating a lipid product. The protein is Phospholipase A2 large subunit of Chersonesometrus fulvipes (Indian black scorpion).